Here is an 860-residue protein sequence, read N- to C-terminus: Leucine--tRNA ligase (860 aa).

A 'HIGH' region motif is present at residues proline 42–histidine 52. Residues lysine 619–serine 623 carry the 'KMSKS' region motif. Residue lysine 622 coordinates ATP.

The protein belongs to the class-I aminoacyl-tRNA synthetase family.

The protein localises to the cytoplasm. It catalyses the reaction tRNA(Leu) + L-leucine + ATP = L-leucyl-tRNA(Leu) + AMP + diphosphate. The polypeptide is Leucine--tRNA ligase (Escherichia coli O17:K52:H18 (strain UMN026 / ExPEC)).